Here is a 166-residue protein sequence, read N- to C-terminus: Interleukin-2 (166 aa).

An N-terminal signal peptide occupies residues 1–20; the sequence is MYSMQLASCVTLTLVLLVNS. O-linked (GalNAc...) threonine glycosylation occurs at Thr23. Cys89 and Cys137 are disulfide-bonded.

This sequence belongs to the IL-2 family.

Its subcellular location is the secreted. Functionally, cytokine produced by activated CD4-positive helper T-cells and to a lesser extend activated CD8-positive T-cells and natural killer (NK) cells that plays pivotal roles in the immune response and tolerance. Binds to a receptor complex composed of either the high-affinity trimeric IL-2R (IL2RA/CD25, IL2RB/CD122 and IL2RG/CD132) or the low-affinity dimeric IL-2R (IL2RB and IL2RG). Interaction with the receptor leads to oligomerization and conformation changes in the IL-2R subunits resulting in downstream signaling starting with phosphorylation of JAK1 and JAK3. In turn, JAK1 and JAK3 phosphorylate the receptor to form a docking site leading to the phosphorylation of several substrates including STAT5. This process leads to activation of several pathways including STAT, phosphoinositide-3-kinase/PI3K and mitogen-activated protein kinase/MAPK pathways. Functions as a T-cell growth factor and can increase NK-cell cytolytic activity as well. Promotes strong proliferation of activated B-cells and subsequently immunoglobulin production. Plays a pivotal role in regulating the adaptive immune system by controlling the survival and proliferation of regulatory T-cells, which are required for the maintenance of immune tolerance. Moreover, participates in the differentiation and homeostasis of effector T-cell subsets, including Th1, Th2, Th17 as well as memory CD8-positive T-cells. This Mus spretus (Western Mediterranean mouse) protein is Interleukin-2 (Il2).